The sequence spans 446 residues: Exodeoxyribonuclease 7 large subunit (446 aa).

This sequence belongs to the XseA family. Heterooligomer composed of large and small subunits.

It is found in the cytoplasm. It carries out the reaction Exonucleolytic cleavage in either 5'- to 3'- or 3'- to 5'-direction to yield nucleoside 5'-phosphates.. Its function is as follows. Bidirectionally degrades single-stranded DNA into large acid-insoluble oligonucleotides, which are then degraded further into small acid-soluble oligonucleotides. The chain is Exodeoxyribonuclease 7 large subunit from Streptococcus pyogenes serotype M49 (strain NZ131).